Here is a 96-residue protein sequence, read N- to C-terminus: Aspartyl/glutamyl-tRNA(Asn/Gln) amidotransferase subunit C (96 aa).

The protein belongs to the GatC family. In terms of assembly, heterotrimer of A, B and C subunits.

It catalyses the reaction L-glutamyl-tRNA(Gln) + L-glutamine + ATP + H2O = L-glutaminyl-tRNA(Gln) + L-glutamate + ADP + phosphate + H(+). The enzyme catalyses L-aspartyl-tRNA(Asn) + L-glutamine + ATP + H2O = L-asparaginyl-tRNA(Asn) + L-glutamate + ADP + phosphate + 2 H(+). Functionally, allows the formation of correctly charged Asn-tRNA(Asn) or Gln-tRNA(Gln) through the transamidation of misacylated Asp-tRNA(Asn) or Glu-tRNA(Gln) in organisms which lack either or both of asparaginyl-tRNA or glutaminyl-tRNA synthetases. The reaction takes place in the presence of glutamine and ATP through an activated phospho-Asp-tRNA(Asn) or phospho-Glu-tRNA(Gln). The protein is Aspartyl/glutamyl-tRNA(Asn/Gln) amidotransferase subunit C of Exiguobacterium sp. (strain ATCC BAA-1283 / AT1b).